A 230-amino-acid chain; its full sequence is 5'-methylthioadenosine/S-adenosylhomocysteine nucleosidase (230 aa).

The Proton acceptor role is filled by glutamate 12. Residues glycine 78, isoleucine 153, and 174–175 contribute to the substrate site; that span reads ME. The active-site Proton donor is aspartate 198.

The protein belongs to the PNP/UDP phosphorylase family. MtnN subfamily.

It carries out the reaction S-adenosyl-L-homocysteine + H2O = S-(5-deoxy-D-ribos-5-yl)-L-homocysteine + adenine. The catalysed reaction is S-methyl-5'-thioadenosine + H2O = 5-(methylsulfanyl)-D-ribose + adenine. The enzyme catalyses 5'-deoxyadenosine + H2O = 5-deoxy-D-ribose + adenine. The protein operates within amino-acid biosynthesis; L-methionine biosynthesis via salvage pathway; S-methyl-5-thio-alpha-D-ribose 1-phosphate from S-methyl-5'-thioadenosine (hydrolase route): step 1/2. In terms of biological role, catalyzes the irreversible cleavage of the glycosidic bond in both 5'-methylthioadenosine (MTA) and S-adenosylhomocysteine (SAH/AdoHcy) to adenine and the corresponding thioribose, 5'-methylthioribose and S-ribosylhomocysteine, respectively. Also cleaves 5'-deoxyadenosine, a toxic by-product of radical S-adenosylmethionine (SAM) enzymes, into 5-deoxyribose and adenine. This chain is 5'-methylthioadenosine/S-adenosylhomocysteine nucleosidase, found in Shewanella piezotolerans (strain WP3 / JCM 13877).